The chain runs to 252 residues: Small ribosomal subunit protein uS3 (252 aa).

The region spanning 38–106 is the KH type-2 domain; it reads IRKYIHARLS…EVQINIFEIK (69 aa). Residues 214–252 form a disordered region; sequence PLAGMDKKQSGTGGGKGGDAPRGKSNFNKGGKPDARKRK. The segment covering 224–233 has biased composition (gly residues); it reads GTGGGKGGDA.

Belongs to the universal ribosomal protein uS3 family. In terms of assembly, part of the 30S ribosomal subunit. Forms a tight complex with proteins S10 and S14.

Its function is as follows. Binds the lower part of the 30S subunit head. Binds mRNA in the 70S ribosome, positioning it for translation. In Flavobacterium johnsoniae (strain ATCC 17061 / DSM 2064 / JCM 8514 / BCRC 14874 / CCUG 350202 / NBRC 14942 / NCIMB 11054 / UW101) (Cytophaga johnsonae), this protein is Small ribosomal subunit protein uS3.